A 344-amino-acid chain; its full sequence is Lysophosphatidic acid receptor 6 (344 aa).

Topologically, residues methionine 1–serine 25 are extracellular. Residue asparagine 5 is glycosylated (N-linked (GlcNAc...) asparagine). The helical transmembrane segment at methionine 26–leucine 46 threads the bilayer. Topologically, residues lysine 47 to methionine 56 are cytoplasmic. A helical transmembrane segment spans residues isoleucine 57–phenylalanine 77. Residues alanine 78 to lysine 90 lie on the Extracellular side of the membrane. A disulfide bridge connects residues cysteine 89 and cysteine 168. The chain crosses the membrane as a helical span at residues isoleucine 91–serine 111. The Cytoplasmic segment spans residues valine 112–lysine 134. The chain crosses the membrane as a helical span at residues isoleucine 135–glutamine 155. Topologically, residues serine 156–arginine 183 are extracellular. Asparagine 162 and asparagine 163 each carry an N-linked (GlcNAc...) asparagine glycan. The chain crosses the membrane as a helical span at residues isoleucine 184–serine 204. Topologically, residues serine 205 to methionine 230 are cytoplasmic. The helical transmembrane segment at isoleucine 231–leucine 251 threads the bilayer. Residues tyrosine 252–methionine 272 lie on the Extracellular side of the membrane. N-linked (GlcNAc...) asparagine glycosylation occurs at asparagine 262. The chain crosses the membrane as a helical span at residues tyrosine 273–phenylalanine 293. Cysteine 284 is lipidated: S-palmitoyl cysteine. Residues threonine 294–isoleucine 344 lie on the Cytoplasmic side of the membrane.

This sequence belongs to the G-protein coupled receptor 1 family. In terms of tissue distribution, ubiquitously expressed. Detected in the hair follicles and skin (at protein level).

The protein resides in the cell membrane. In terms of biological role, binds to oleoyl-L-alpha-lysophosphatidic acid (LPA). Intracellular cAMP is involved in the receptor activation. Important for the maintenance of hair growth and texture. The sequence is that of Lysophosphatidic acid receptor 6 (Lpar6) from Mus musculus (Mouse).